We begin with the raw amino-acid sequence, 155 residues long: Chromosomal passenger complex protein bir-1 (155 aa).

A BIR repeat occupies 20–87 (RLMTFKNFEY…KRDEPCEFVR (68 aa)). The Zn(2+) site is built by Cys57, Cys60, His76, and Cys83.

The protein belongs to the IAP family. In terms of assembly, component of the CPC complex which consists of icp-1; csc-1; bir-1 and air-2. Within the complex, interacts with csc-1, icp-1 and air-2. Interacts with csc-1 in a zinc-dependent-manner; the interaction is direct. In terms of tissue distribution, expressed in oocytes and sperm.

The protein resides in the chromosome. It localises to the cytoplasm. Its subcellular location is the cytoskeleton. It is found in the spindle. The protein localises to the midbody. Its function is as follows. Component of the chromosomal passenger complex (CPC), a complex that acts as a key regulator of chromosome segregation and cytokinesis. The CPC complex has essential functions at the centromere in ensuring correct chromosome condensation, alignment and segregation. In the complex, required to direct the Aurora B/air-2 kinase to chromosomes. Also functions in spindle midzone formation and in the formation of polar bodies during oogenesis. Required for the localization of the kinetochore component hcp-1 to chromosomes. Involved in the positive regulation of transcription. Involved in the transcriptional regulation of collagen genes. The protein is Chromosomal passenger complex protein bir-1 of Caenorhabditis elegans.